A 1358-amino-acid polypeptide reads, in one-letter code: DNA-directed RNA polymerase subunit beta (1358 aa).

The protein belongs to the RNA polymerase beta chain family. The RNAP catalytic core consists of 2 alpha, 1 beta, 1 beta' and 1 omega subunit. When a sigma factor is associated with the core the holoenzyme is formed, which can initiate transcription.

It catalyses the reaction RNA(n) + a ribonucleoside 5'-triphosphate = RNA(n+1) + diphosphate. In terms of biological role, DNA-dependent RNA polymerase catalyzes the transcription of DNA into RNA using the four ribonucleoside triphosphates as substrates. In Francisella tularensis subsp. holarctica (strain OSU18), this protein is DNA-directed RNA polymerase subunit beta.